Consider the following 463-residue polypeptide: Cysteine--tRNA ligase (463 aa).

A Zn(2+)-binding site is contributed by Cys29. The 'HIGH' region motif lies at 31 to 41; the sequence is PTVYDFAHIGN. Residues Cys227, His252, and Glu256 each contribute to the Zn(2+) site. The 'KMSKS' region motif lies at 285–289; that stretch reads KMSKS. ATP is bound at residue Lys288.

The protein belongs to the class-I aminoacyl-tRNA synthetase family. Monomer. Zn(2+) serves as cofactor.

The protein resides in the cytoplasm. The enzyme catalyses tRNA(Cys) + L-cysteine + ATP = L-cysteinyl-tRNA(Cys) + AMP + diphosphate. The sequence is that of Cysteine--tRNA ligase from Rhodopseudomonas palustris (strain BisB5).